A 1286-amino-acid polypeptide reads, in one-letter code: Lysine-specific demethylase JMJ705 (1286 aa).

Positions 25-66 constitute a JmjN domain; the sequence is APEFRPTAAEFADPVSYILKIEPAAAPYGICKVVPPLPPPPK. Positions 82–105 are disordered; sequence PDDRSPSFPTRHQQVGLCPRRTRP. Positions 201–367 constitute a JmjC domain; that stretch reads ETAWNMRGVA…IAKEAAIRRA (167 aa). Fe cation is bound by residues His244, Glu246, and His335. Over residues 641-679 the composition is skewed to polar residues; sequence PNSSNNVGCVGTKLSSSSTERQERPSSQNAHCNGSSVIS. 3 disordered regions span residues 641 to 686, 1013 to 1060, and 1077 to 1164; these read PNSS…KGVR, AEPV…HSQE, and PAGT…PKQA. Residues 1119–1136 are compositionally biased toward polar residues; it reads HASGQKSNVQEANANSAS. The C2H2-type 1; degenerate zinc finger occupies 1167 to 1189; the sequence is YSCDIEGCSMSFRTKRDLSLHKS. 3 consecutive C2H2-type zinc fingers follow at residues 1190–1214, 1220–1244, and 1250–1276; these read DICP…RKVH, LTCP…LRVH, and YVCH…KTGH.

It depends on Fe(2+) as a cofactor. As to expression, expressed in leaves and flag leaves. Expressed at low levels in roots, shoots, stems and panicles.

It is found in the nucleus. It catalyses the reaction N(6),N(6),N(6)-trimethyl-L-lysyl(27)-[histone H3] + 2 2-oxoglutarate + 2 O2 = N(6)-methyl-L-lysyl(27)-[histone H3] + 2 formaldehyde + 2 succinate + 2 CO2. Its function is as follows. Histone demethylase that demethylates 'Lys-27' (H3K27me) of histone H3 with a specific activity for H3K27me3 and H3K27me2. No activity on H3K4me3, H3K9me3, H3K27me1 and H3K36me3. Involved in biotic stress response. May demethylate H3K27me3-marked defense-related genes and increase their basal and induced expression levels during pathogen infection. This is Lysine-specific demethylase JMJ705 (JMJ705) from Oryza sativa subsp. japonica (Rice).